Consider the following 100-residue polypeptide: MTEKLSVEVAYARPDRQWLVALTLPAGATALDAALASGILEACPELDRTALKLGVFGKAAKPDAALREHDRVEIYRPLLADPKEVRRQRAEAGKRMKKGG.

Belongs to the UPF0125 (RnfH) family.

The protein is UPF0125 protein CV_3462 of Chromobacterium violaceum (strain ATCC 12472 / DSM 30191 / JCM 1249 / CCUG 213 / NBRC 12614 / NCIMB 9131 / NCTC 9757 / MK).